The sequence spans 160 residues: MTSADRRRDAVARIIRARRIGTQEELLAALERAGFRATQATLSRDLARLGARRVSGPEGAVYELGADGADGGLAALRGLVSSIAANASMVVIRTHPGSAPAIARAIDLAQPPEVLGTIAGDDTIFVAPAGELRPRRLAARLAELLGTPSALAGDGGERTH.

It belongs to the ArgR family.

The protein localises to the cytoplasm. It functions in the pathway amino-acid biosynthesis; L-arginine biosynthesis [regulation]. Its function is as follows. Regulates arginine biosynthesis genes. The sequence is that of Arginine repressor from Anaeromyxobacter sp. (strain K).